The sequence spans 414 residues: Esterase FrsA (414 aa).

Belongs to the FrsA family.

The catalysed reaction is a carboxylic ester + H2O = an alcohol + a carboxylate + H(+). In terms of biological role, catalyzes the hydrolysis of esters. The protein is Esterase FrsA of Klebsiella pneumoniae subsp. pneumoniae (strain ATCC 700721 / MGH 78578).